A 172-amino-acid polypeptide reads, in one-letter code: uncharacterized protein (172 aa).

Residues 3-171 (KKVAIILADE…FNREIVKKLE (169 aa)) enclose the PfpI endopeptidase domain.

Belongs to the peptidase C56 family.

This is an uncharacterized protein from Staphylococcus epidermidis (strain ATCC 35984 / DSM 28319 / BCRC 17069 / CCUG 31568 / BM 3577 / RP62A).